The chain runs to 157 residues: Crossover junction endodeoxyribonuclease RuvC (157 aa).

Residues aspartate 7, glutamate 67, and aspartate 139 contribute to the active site. Positions 7, 67, and 139 each coordinate Mg(2+).

It belongs to the RuvC family. As to quaternary structure, homodimer which binds Holliday junction (HJ) DNA. The HJ becomes 2-fold symmetrical on binding to RuvC with unstacked arms; it has a different conformation from HJ DNA in complex with RuvA. In the full resolvosome a probable DNA-RuvA(4)-RuvB(12)-RuvC(2) complex forms which resolves the HJ. It depends on Mg(2+) as a cofactor.

The protein resides in the cytoplasm. The catalysed reaction is Endonucleolytic cleavage at a junction such as a reciprocal single-stranded crossover between two homologous DNA duplexes (Holliday junction).. The RuvA-RuvB-RuvC complex processes Holliday junction (HJ) DNA during genetic recombination and DNA repair. Endonuclease that resolves HJ intermediates. Cleaves cruciform DNA by making single-stranded nicks across the HJ at symmetrical positions within the homologous arms, yielding a 5'-phosphate and a 3'-hydroxyl group; requires a central core of homology in the junction. The consensus cleavage sequence is 5'-(A/T)TT(C/G)-3'. Cleavage occurs on the 3'-side of the TT dinucleotide at the point of strand exchange. HJ branch migration catalyzed by RuvA-RuvB allows RuvC to scan DNA until it finds its consensus sequence, where it cleaves and resolves the cruciform DNA. The sequence is that of Crossover junction endodeoxyribonuclease RuvC from Prochlorococcus marinus (strain AS9601).